A 142-amino-acid polypeptide reads, in one-letter code: Large ribosomal subunit protein uL11 (142 aa).

It belongs to the universal ribosomal protein uL11 family. Part of the ribosomal stalk of the 50S ribosomal subunit. Interacts with L10 and the large rRNA to form the base of the stalk. L10 forms an elongated spine to which L12 dimers bind in a sequential fashion forming a multimeric L10(L12)X complex. In terms of processing, one or more lysine residues are methylated.

Functionally, forms part of the ribosomal stalk which helps the ribosome interact with GTP-bound translation factors. This is Large ribosomal subunit protein uL11 from Pectobacterium atrosepticum (strain SCRI 1043 / ATCC BAA-672) (Erwinia carotovora subsp. atroseptica).